A 392-amino-acid chain; its full sequence is Caveolae-associated protein 1 (392 aa).

Met-1 carries the post-translational modification N-acetylmethionine. The segment covering Met-1 to Glu-10 has biased composition (basic and acidic residues). Positions Met-1–Leu-45 are disordered. The interval Met-1 to Lys-100 is required for homotrimerization and for interaction with CAVIN2 and CAVIN3. Phosphoserine occurs at positions 21 and 38. Phosphothreonine is present on Thr-40. 2 positions are modified to phosphoserine: Ser-42 and Ser-48. The nuclear export signal stretch occupies residues Val-54 to Ile-64. Residues Leu-55–Leu-77 form a leucine-zipper 1 region. A Glycyl lysine isopeptide (Lys-Gly) (interchain with G-Cter in SUMO2) cross-link involves residue Lys-118. A Phosphoserine modification is found at Ser-120. Lys-124 is covalently cross-linked (Glycyl lysine isopeptide (Lys-Gly) (interchain with G-Cter in SUMO2)). The interval Lys-138–Lys-154 is nuclear localization signal. Tyr-158 is modified (phosphotyrosine). Residue Lys-163 forms a Glycyl lysine isopeptide (Lys-Gly) (interchain with G-Cter in SUMO1); alternate linkage. Lys-163 participates in a covalent cross-link: Glycyl lysine isopeptide (Lys-Gly) (interchain with G-Cter in SUMO2); alternate. Lys-167 participates in a covalent cross-link: Glycyl lysine isopeptide (Lys-Gly) (interchain with G-Cter in SUMO2). Positions Leu-168 to Leu-188 are leucine-zipper 2. A phosphoserine mark is found at Ser-169 and Ser-171. A Glycyl lysine isopeptide (Lys-Gly) (interchain with G-Cter in SUMO2) cross-link involves residue Lys-172. Residues Ser-173 and Ser-177 each carry the phosphoserine modification. The span at Ser-173–Lys-183 shows a compositional bias: basic and acidic residues. A disordered region spans residues Ser-173–Ala-198. Residues Glu-184–Ala-198 are compositionally biased toward acidic residues. Residues Ile-201 to Val-284 adopt a coiled-coil conformation. Phosphoserine is present on residues Ser-204 and Ser-205. Residues Lys-235–Arg-251 form a nuclear localization signal region. The interval Leu-259 to Leu-299 is leucine-zipper 3. Ser-302 carries the phosphoserine modification. Thr-304 is modified (phosphothreonine). Phosphotyrosine is present on Tyr-310. Lys-328 participates in a covalent cross-link: Glycyl lysine isopeptide (Lys-Gly) (interchain with G-Cter in SUMO2). The segment at Gly-347–Ser-367 is disordered. The span at Gly-354–Leu-363 shows a compositional bias: basic and acidic residues. Phosphoserine is present on residues Ser-367, Ser-368, Ser-381, Ser-389, and Ser-391.

This sequence belongs to the CAVIN family. In terms of assembly, component of the CAVIN complex composed of CAVIN1, CAVIN2, CAVIN3 and CAVIN4. Interacts with RNA polymerase I subunit POLR1A/RPA1 and TTF1. Binds the 3' end of pre-rRNA. Interacts with transcription factor ZNF148. Interacts with LIPE in the adipocyte cytoplasm. Interacts with CAV1, CAV3, CAVIN2, CAVIN3 and CAVIN4. In terms of processing, phosphorylated. Present in active and inactive forms. Changes in phosphorylation pattern may alter activity. Phosphorylation at Tyr-158 is essential for its function in the regulation of ribosomal transcriptional activity. Post-translationally, monoubiquitinated. As to expression, expressed in the adipocyte (at protein level). Expressed in all striated and smooth muscles tested including diaphragm, esophageal striated muscle, fibroblast, endocardial endothelium, epicardial mesothelium, intestinal smooth muscle, masseter, soleus muscle, vascular smooth muscle and white gastrocnemius muscle (at protein level). Expressed in the endothelium and perineural sheath (at protein level). Not expressed in hepatocytes.

The protein resides in the membrane. It is found in the caveola. It localises to the cell membrane. Its subcellular location is the microsome. The protein localises to the endoplasmic reticulum. The protein resides in the cytoplasm. It is found in the cytosol. It localises to the mitochondrion. Its subcellular location is the nucleus. In terms of biological role, plays an important role in caveolae formation and organization. Essential for the formation of caveolae in all tissues. Core component of the CAVIN complex which is essential for recruitment of the complex to the caveolae in presence of calveolin-1 (CAV1). Essential for normal oligomerization of CAV1. Promotes ribosomal transcriptional activity in response to metabolic challenges in the adipocytes and plays an important role in the formation of the ribosomal transcriptional loop. Dissociates transcription complexes paused by DNA-bound TTF1, thereby releasing both RNA polymerase I and pre-RNA from the template. The caveolae biogenesis pathway is required for the secretion of proteins such as GASK1A. The polypeptide is Caveolae-associated protein 1 (Rattus norvegicus (Rat)).